Reading from the N-terminus, the 477-residue chain is UDP-N-acetylmuramate--L-alanine ligase (477 aa).

Residue 122-128 (GTHGKTT) participates in ATP binding.

This sequence belongs to the MurCDEF family.

It is found in the cytoplasm. It catalyses the reaction UDP-N-acetyl-alpha-D-muramate + L-alanine + ATP = UDP-N-acetyl-alpha-D-muramoyl-L-alanine + ADP + phosphate + H(+). The protein operates within cell wall biogenesis; peptidoglycan biosynthesis. Its function is as follows. Cell wall formation. The polypeptide is UDP-N-acetylmuramate--L-alanine ligase (Xylella fastidiosa (strain 9a5c)).